Reading from the N-terminus, the 577-residue chain is Phosphatidylinositol/phosphatidylcholine transfer protein SFH14 (577 aa).

Positions 1–22 (MSGREQTGEKLSDSEYIEEEPR) are disordered. A CRAL-TRIO domain is found at 136 to 311 (ELDEVTRHYP…FLGGLCKCPN (176 aa)). The interval 364–383 (ETLKEEPEPEEYYSSTGSRS) is disordered. Residues 523–550 (EANEKLLAESLERIKSLELDLDKTKSVL) are a coiled coil.

It belongs to the SFH family.

Its subcellular location is the golgi apparatus membrane. It is found in the cell membrane. Its function is as follows. Required for transport of secretory proteins from the Golgi complex. Catalyzes the transfer of phosphatidylinositol and phosphatidylcholine between membranes in vitro. This chain is Phosphatidylinositol/phosphatidylcholine transfer protein SFH14 (SFH14), found in Arabidopsis thaliana (Mouse-ear cress).